The sequence spans 1351 residues: Bromodomain-containing protein 4A (1351 aa).

Disordered stretches follow at residues 1-23 (MSSE…GIEG), 35-58 (PQPQ…QPKR), 168-244 (ETEL…RPPA), 285-368 (AAQP…DTKT), 478-638 (EPEE…PMSY), 700-799 (CLRK…LDSS), and 821-1334 (PDLP…PSID). Residues 58–164 (RQTNQLQYLL…KLFLQKISEM (107 aa)) enclose the Bromo 1 domain. Positions 208–219 (VKPPVTPVSKPS) are enriched in low complexity. The segment covering 220-235 (TPTPPTVTRAPTPPQT) has biased composition (pro residues). Residues 327–343 (PRKENGRQIRPTKKTEV) show a composition bias toward basic and acidic residues. Pro residues predominate over residues 349 to 359 (PAPPVLHPQPA). In terms of domain architecture, Bromo 2 spans 366 to 475 (TKTSEQLRYC…DVFEMRFAKM (110 aa)). The span at 482–504 (APAPVPSLAPGPPAPSIKGPPPT) shows a compositional bias: pro residues. The NPS region stretch occupies residues 504–522 (TSSDSSSDSTSDSESSSDS). Residues 505-517 (SSDSSSDSTSDSE) show a composition bias toward low complexity. The tract at residues 543 to 598 (QLAALSQPQPNKPKKKEREKRKEKHKRKEEVEEPRKGRIREPPAKKPKKSVQGSGG) is BID region. Positions 554-569 (KPKKKEREKRKEKHKR) are enriched in basic residues. Over residues 570 to 586 (KEEVEEPRKGRIREPPA) the composition is skewed to basic and acidic residues. Over residues 607–621 (PPPAPRPARPAPPSA) the composition is skewed to pro residues. Residues 624 to 708 (ESSEEETQRC…SCLRKKRKSQ (85 aa)) form the NET domain. The segment covering 629 to 638 (ETQRCRPMSY) has biased composition (basic and acidic residues). The span at 725 to 738 (SSSESESSSESSTS) shows a compositional bias: low complexity. Basic residues predominate over residues 751–767 (QKKKGHSGRESRKHHHP). The segment covering 788–799 (PSYPLPSSLDSS) has biased composition (low complexity). A compositionally biased stretch (pro residues) spans 872 to 890 (PAMPPSASPPPPAPQPPQQ). Over residues 892 to 902 (HVHHHHHHHAQ) the composition is skewed to basic residues. Residues 927 to 953 (LQKSQQPPTQSPIHSLLTSVKVQSQTP) are compositionally biased toward polar residues. Residues 968–983 (VYPPPPSTATTAPPPA) are compositionally biased toward pro residues. Composition is skewed to low complexity over residues 994–1003 (PVVPQQLPAG) and 1011–1028 (QQQQ…SHQQ). Residues 1051–1350 (RQQKQETYPG…LMEIFEQNLF (300 aa)) form a C-terminal (CTD) region region. Pro residues predominate over residues 1075–1089 (PPVPPYPGLTHPPSP). 2 stretches are compositionally biased toward basic and acidic residues: residues 1150–1161 (PRPDLKKMDGGR) and 1176–1197 (PEKE…DIKI). Over residues 1214-1224 (PTSAGKSTSDS) the composition is skewed to polar residues. Residues 1226–1284 (ELFRRQAREKEERERALKLQAEQAERVRREQDRMSRTREDDEVQDQARKAHEEARRRQE) show a composition bias toward basic and acidic residues. A compositionally biased stretch (low complexity) spans 1301–1310 (SPAQSSQPMM). Over residues 1311 to 1323 (DQREMARKREQER) the composition is skewed to basic and acidic residues.

It belongs to the BET family.

The protein resides in the nucleus. It localises to the chromosome. In terms of biological role, chromatin reader protein that recognizes and binds acetylated histones and plays a key role in transmission of epigenetic memory across cell divisions and transcription regulation. Remains associated with acetylated chromatin throughout the entire cell cycle and provides epigenetic memory for postmitotic G1 gene transcription by preserving acetylated chromatin status and maintaining high-order chromatin structure. During interphase, plays a key role in regulating the transcription of signal-inducible genes by associating with the P-TEFb complex and recruiting it to promoters. The polypeptide is Bromodomain-containing protein 4A (brd4-a) (Xenopus laevis (African clawed frog)).